We begin with the raw amino-acid sequence, 65 residues long: Small ribosomal subunit protein bS21 (65 aa).

It belongs to the bacterial ribosomal protein bS21 family.

The polypeptide is Small ribosomal subunit protein bS21 (Acidobacterium capsulatum (strain ATCC 51196 / DSM 11244 / BCRC 80197 / JCM 7670 / NBRC 15755 / NCIMB 13165 / 161)).